Consider the following 413-residue polypeptide: Enhanced ethylene response protein 5 (413 aa).

The PCI domain maps to 216-402 (VTYMYYTGRL…KVVVLSKQDP (187 aa)).

In terms of assembly, interacts with EIN2 (via C-terminus). May also interact weakly with CSN8. Interacts with DSS1(V), AMPD, SAC3A, SAC3B and At5g61290 (AC Q9FLK4). Interacts with UCH1 and UCH2. Interacts with NUP1, anchoring the TREX-2 complex on the nuclear pore complex. As to expression, expressed at low levels in roots, leaves, stems and shoots. Detected in seedlings, roots, leaves and anthers.

It is found in the nucleus. Functionally, involved in the regulation of ethylene response. Probable TREX-2 component required for nuclear RNA export. The TREX-2 complex (transcription and export complex 2) functions in docking export-competent ribonucleoprotein particles (mRNPs) to the nuclear entrance of the nuclear pore complex (nuclear basket). TREX-2 participates in mRNA export and accurate chromatin positioning in the nucleus by tethering genes to the nuclear periphery. The polypeptide is Enhanced ethylene response protein 5 (Arabidopsis thaliana (Mouse-ear cress)).